Reading from the N-terminus, the 513-residue chain is Maturase K (513 aa).

Belongs to the intron maturase 2 family. MatK subfamily.

Its subcellular location is the plastid. It localises to the chloroplast. Functionally, usually encoded in the trnK tRNA gene intron. Probably assists in splicing its own and other chloroplast group II introns. This is Maturase K from Pinus parviflora (Japanese white pine).